The chain runs to 152 residues: Superoxide dismutase [Cu-Zn] 2 (152 aa).

N-linked (GlcNAc...) asparagine glycosylation is found at Asn9 and Asn33. 3 residues coordinate Cu cation: His45, His47, and His62. Cys56 and Cys145 are oxidised to a cystine. Residues His62, His70, His79, and Asp82 each coordinate Zn(2+). The N-linked (GlcNAc...) asparagine glycan is linked to Asn85. His119 lines the Cu cation pocket.

The protein belongs to the Cu-Zn superoxide dismutase family. The cofactor is Cu cation. Zn(2+) serves as cofactor. In terms of tissue distribution, expressed in fruits, leaves and pollen grains.

It is found in the cytoplasm. It localises to the endoplasmic reticulum. The catalysed reaction is 2 superoxide + 2 H(+) = H2O2 + O2. Its activity is regulated as follows. Inhibited by KCN and H(2)O(2). Destroys radicals which are normally produced within the cells and which are toxic to biological systems. Probably involved in the protection against oxidative stress during pollen development. The protein is Superoxide dismutase [Cu-Zn] 2 (OLE5) of Olea europaea (Common olive).